Reading from the N-terminus, the 154-residue chain is Anti-sigma-E factor RseA (154 aa).

T39 is subject to Phosphothreonine; by PknB. Zn(2+) is bound by residues H66, C70, and C73. The disordered stretch occupies residues 104–154 (SEIPRCPPEGPSKGSSGGSSQGPPDGAAAGFGDRFADGDGGNRGRQSRVRR). Positions 124-136 (QGPPDGAAAGFGD) are enriched in low complexity.

It belongs to the zinc-associated anti-sigma factor (ZAS) superfamily. As to quaternary structure, interacts with cognate ECF RNA polymerase sigma factor SigE under reducing conditions; this inhibits the interaction of SigE with the RNA polymerase catalytic core. Zn(2+) is required as a cofactor. Post-translationally, phosphorylated by PknB on Thr-39; can be dephosphorylated (at least in vitro) by PstP. Phosphorylation is the signal for subsequent degradation by the ClpC1-ClpP2 complex. In terms of processing, degraded following vancomycin treatment (surface stress) by a ClpC1-ClpP2 complex.

Its subcellular location is the cytoplasm. Functionally, an anti-sigma factor for extracytoplasmic function (ECF) sigma factor SigE. ECF sigma factors are held in an inactive form by an anti-sigma factor. The sequence is that of Anti-sigma-E factor RseA (rseA) from Mycobacterium tuberculosis (strain ATCC 25618 / H37Rv).